Here is a 756-residue protein sequence, read N- to C-terminus: Xylosyl- and glucuronyltransferase LARGE1 (756 aa).

Residues 1–10 (MLGICRGRRK) lie on the Cytoplasmic side of the membrane. The chain crosses the membrane as a helical; Signal-anchor for type II membrane protein span at residues 11–31 (FLAASLTLLCIPAITWIYLFA). Topologically, residues 32–756 (GSFEDGKPVS…LKYLTAENNS (725 aa)) are lumenal. 2 disordered regions span residues 43-64 (SPLE…ERES) and 82-108 (QLSL…EEGT). Over residues 44–58 (PLESQAHSPRYTASS) the composition is skewed to polar residues. Residues 53-95 (RYTASSQRERESLEVRVREVEEENRALRRQLSLAQGQSPAHHR) are a coiled coil. N-linked (GlcNAc...) asparagine glycosylation is found at Asn-97, Asn-122, and Asn-148. The segment at 138–413 (IHVAIVCAGY…FLEYDGNLLR (276 aa)) is xylosyltransferase activity. Mn(2+)-binding residues include Asp-242 and Asp-244. Asn-272 is a glycosylation site (N-linked (GlcNAc...) asparagine). The glucuronyltransferase activity stretch occupies residues 414–756 (RELFGCPSET…LKYLTAENNS (343 aa)). Mn(2+) is bound by residues Asp-563 and Asp-565.

This sequence in the C-terminal section; belongs to the glycosyltransferase 49 family. It in the N-terminal section; belongs to the glycosyltransferase 8 family. Interacts with DAG1 (via the N-terminal domain of alpha-DAG1); the interaction increases binding of DAG1 to laminin. Interacts with B4GAT1. It depends on Mn(2+) as a cofactor. In terms of tissue distribution, ubiquitous. Highest expression in heart, diaphragm and brain, where it is especially found in cerebral cortex, hippocampus, and trigeminal ganglion.

The protein resides in the golgi apparatus membrane. The catalysed reaction is 3-O-[beta-D-GlcA-(1-&gt;3)-beta-D-Xyl-(1-&gt;4)-Rib-ol-P-Rib-ol-P-3-beta-D-GalNAc-(1-&gt;3)-beta-D-GlcNAc-(1-&gt;4)-(O-6-P-alpha-D-Man)]-Thr-[protein] + UDP-alpha-D-xylose = 3-O-[alpha-D-Xyl-(1-&gt;3)-beta-D-GlcA-(1-&gt;4)-beta-D-Xyl-(1-&gt;4)-Rib-ol-P-Rib-ol-P-3-beta-D-GalNAc-(1-&gt;3)-beta-D-GlcNAc-(1-&gt;4)-(O-6-P-alpha-D-Man)]-Thr-[protein] + UDP + H(+). It carries out the reaction 3-O-{(1-&gt;[3)-alpha-D-Xyl-(1-&gt;3)-beta-D-GlcA-(1-&gt;](n)-4)-beta-D-Xyl-(1-&gt;4)-Rib-ol-P-Rib-ol-P-3-beta-D-GalNAc-(1-&gt;3)-beta-D-GlcNAc-(1-&gt;4)-O-6-P-alpha-D-Man}-L-Thr-[protein] + UDP-alpha-D-glucuronate = 3-O-{beta-D-GlcA-(1-&gt;[3)-alpha-D-Xyl-(1-&gt;3)-beta-D-GlcA-(1-&gt;](n)-4)-beta-D-Xyl-(1-&gt;4)-Rib-ol-P-Rib-ol-P-3-beta-D-GalNAc-(1-&gt;3)-beta-D-GlcNAc-(1-&gt;4)-O-6-P-alpha-D-Man}-L-Thr-[protein] + UDP + H(+). It catalyses the reaction 3-O-{beta-D-GlcA-(1-&gt;[3)-alpha-D-Xyl-(1-&gt;3)-beta-D-GlcA-(1-&gt;](n)-4)-beta-D-Xyl-(1-&gt;4)-Rib-ol-P-Rib-ol-P-3-beta-D-GalNAc-(1-&gt;3)-beta-D-GlcNAc-(1-&gt;4)-O-6-P-alpha-D-Man}-L-Thr-[protein] + UDP-alpha-D-xylose = 3-O-{(1-&gt;[3)-alpha-D-Xyl-(1-&gt;3)-beta-D-GlcA-(1-&gt;](n+1)-4)-beta-D-Xyl-(1-&gt;4)-Rib-ol-P-Rib-ol-P-3-beta-D-GalNAc-(1-&gt;3)-beta-D-GlcNAc-(1-&gt;4)-O-6-P-alpha-D-Man}-L-Thr-[protein] + UDP + H(+). It functions in the pathway protein modification; protein glycosylation. In terms of biological role, bifunctional glycosyltransferase with both alpha-1,3-xylosyltransferase and beta-1,3-glucuronyltransferase activities involved in the maturation of alpha-dystroglycan (DAG1) by glycosylation leading to DAG1 binding to laminin G-like domain-containing extracellular proteins with high affinity. Elongates the glucuronyl-beta-1,4-xylose-beta disaccharide primer structure initiated by B4GAT1 by adding repeating units [-3-Xylose-alpha-1,3-GlcA-beta-1-] to produce a heteropolysaccharide. Requires the phosphorylation of core M3 (O-mannosyl trisaccharide) by POMK to elongate the glucuronyl-beta-1,4-xylose-beta disaccharide primer. Plays a key role in skeletal muscle function and regeneration. In Mus musculus (Mouse), this protein is Xylosyl- and glucuronyltransferase LARGE1.